The following is a 702-amino-acid chain: MAAPMTPAARPEDYEAALNAALADVPELARLLEIDPYLKPYAVDFQRRYKQFSQILKNIGENEGGIDKFSRGYESFGVHRCADGGLYCKEWAPGAEGVFLTGDFNGWNPFSYPYKKLDYGKWELYIPPKQNKSVLVPHGSKLKVVITSKSGEILYRISPWAKYVVREGDNVNYDWIHWDPEHSYEFKHSRPKKPRSLRIYESHVGISSHEGKVASYKHFTCNVLPRIKGLGYNCIQLMAIMEHAYYASFGYQITSFFAASSRYGTPEELQELVDTAHSMGIIVLLDVVHSHASKNSADGLNMFDGTDSCYFHSGPRGTHDLWDSRLFAYSSWEILRFLLSNIRWWLEEYRFDGFRFDGVTSMLYHHHGVGQGFSGDYSEYFGLQVDEDALTYLMLANHLVHTLCPDSITIAEDVSGMPALCSPISQGGGGFDYRLAMAIPDKWIQLLKEFKDEDWNMGDIVYTLTNRRYLEKCIAYAESHDQALVGDKSLAFWLMDAEMYTNMSVLTPFTPVIDRGIQLHKMIRLITHGLGGEGYLNFMGNEFGHPEWLDFPRKGNNESYHYARRQFHLTDDDLLRYKFLNNFDRDMNRLEERYGWLAAPQAYVSEKHEGNKIIAFERAGLLFIFNFHPSKSYTDYRVGTALPGKFKIVLDSDAAEYGGHQRLDHSTDFFSEAFEHNGRPYSLLVYIPSRVALILQNVDLPN.

Ala-2 is subject to N-acetylalanine. Substrate-binding positions include 62 to 63 and 91 to 93; these read NE and WAP. (1,4-alpha-D-glucosyl)n is bound at residue Trp-107. 118-121 contacts substrate; it reads DYGK. Lys-143 contributes to the (1,4-alpha-D-glucosyl)n binding site. Position 173 is a phosphotyrosine (Tyr-173). Residue 333–336 participates in substrate binding; the sequence is EILR. Catalysis depends on Asp-357, which acts as the Nucleophile. The active-site Proton donor is the Glu-412.

This sequence belongs to the glycosyl hydrolase 13 family. GlgB subfamily. Monomer.

The enzyme catalyses Transfers a segment of a (1-&gt;4)-alpha-D-glucan chain to a primary hydroxy group in a similar glucan chain.. It functions in the pathway glycan biosynthesis; glycogen biosynthesis. Functionally, glycogen-branching enzyme participates in the glycogen biosynthetic process along with glycogenin and glycogen synthase. Generates alpha-1,6-glucosidic branches from alpha-1,4-linked glucose chains, to increase solubility of the glycogen polymer. The protein is 1,4-alpha-glucan-branching enzyme (GBE1) of Homo sapiens (Human).